The primary structure comprises 317 residues: Taste receptor type 2 member 14 (317 aa).

Residues M1–S7 are Extracellular-facing. Residues I8 to A28 traverse the membrane as a helical segment. The Cytoplasmic segment spans residues L29–R55. The helical transmembrane segment at I56 to F76 threads the bilayer. Residues A77–N87 lie on the Extracellular side of the membrane. Cholesterol is bound by residues T86 and W89. Residues I88–F108 form a helical membrane-spanning segment. At L109–V129 the chain is on the cytoplasmic side. A helical membrane pass occupies residues V130–I150. The Extracellular portion of the chain corresponds to H151–T184. N153, N162, and N171 each carry an N-linked (GlcNAc...) asparagine glycan. V180 serves as a coordination point for cholesterol. The chain crosses the membrane as a helical span at residues V185 to L205. The Cytoplasmic portion of the chain corresponds to W206 to S232. A helical membrane pass occupies residues V233 to T253. Residues S254 to L261 are Extracellular-facing. A helical transmembrane segment spans residues I262–L282. Cholesterol is bound by residues S265 and M268. Residues G283–S317 lie on the Cytoplasmic side of the membrane.

Belongs to the G-protein coupled receptor T2R family. As to quaternary structure, core component of the TAS2R14-GNAI1 complex, consisting of TAS2R14, GNAI1, GNB1 and GNG2; within the complex interacts with GNAI1. Core component of the TAS2R14-GNAT3 complex, consisting of TAS2R14, GNAT3, GNB1 and GNG2; within the complex interacts with GNAT3. Core component of the TAS2R14-GNAS2 complex, consisting of TAS2R14, GNAS2, GNB1 and GNG2; within the complex interacts with GNAS2.

It localises to the membrane. It carries out the reaction Ca(2+)(in) = Ca(2+)(out). The catalysed reaction is 3',5'-cyclic AMP(in) = 3',5'-cyclic AMP(out). With respect to regulation, basal activity is enhanced by binding to bitter tastants, such as flufenamic acid and aristolochic acid. Regulated by cholesterol in a concentration-dependent manner. Gustducin-linked G-protein coupled receptor that plays a role in the perception of bitterness. The activity of this receptor stimulates GNAT3, activating the gustducin G-protein pathway. Likely plays a role in sensing the chemical composition of the gastrointestinal content and other extra-oral tissues via the inhibitory G-protein pathways. This Gorilla gorilla gorilla (Western lowland gorilla) protein is Taste receptor type 2 member 14 (TAS2R14).